We begin with the raw amino-acid sequence, 406 residues long: 2-epi-valiolone synthase (406 aa).

A disordered region spans residues 1-21 (MPSTGSTPILAHDVKSPHRGS). Residues 105–108 (EPSK), 137–141 (GVLCD), 161–162 (TS), Lys-174, Lys-183, and 201–204 (CLAT) each bind NAD(+). Zn(2+)-binding residues include Glu-216, His-287, and His-304.

This sequence belongs to the sugar phosphate cyclases superfamily. EVS family. Requires NAD(+) as cofactor. The cofactor is Co(2+). Zn(2+) serves as cofactor.

It catalyses the reaction D-sedoheptulose 7-phosphate = 2-epi-valiolone + phosphate. Its function is as follows. Catalyzes the conversion of sedoheptulose 7-phosphate to 2-epi-valiolone, which may serve as an alternative precursor for aminocyclitol biosynthesis. This Stigmatella aurantiaca (strain DW4/3-1) protein is 2-epi-valiolone synthase.